The following is a 182-amino-acid chain: UPF0397 protein llmg_0343 (182 aa).

A run of 5 helical transmembrane segments spans residues 8–28, 42–62, 74–94, 114–134, and 146–166; these read IVVA…LINI, AVLA…IGFI, APWW…GFGV, IVQF…GDIL, and QGVV…TLLL.

This sequence belongs to the UPF0397 family.

It localises to the cell membrane. This is UPF0397 protein llmg_0343 from Lactococcus lactis subsp. cremoris (strain MG1363).